The following is a 57-amino-acid chain: Large ribosomal subunit protein bL33 (57 aa).

Belongs to the bacterial ribosomal protein bL33 family.

The chain is Large ribosomal subunit protein bL33 from Shewanella denitrificans (strain OS217 / ATCC BAA-1090 / DSM 15013).